The following is a 2968-amino-acid chain: MDGRDFGPQRSVHGPPPPLLSGLAMDSHRVGAATAGRLPASGLPGPLPPGKYMAGLNLHPHPGEAFLGSFVASGMGPSASSHGSPVPLPSDLSFRSPTPSNLPMVQLWAAHAHEGFSHLPSGLYPSYLHLNHLEPPSSGSPLLSQLGQPSIFDTQKGQGPGGDGFYLPTAGAPGSLHSHAPSARTPGGGHSSGAPAKGSSSRDGPAKERAGRGGEPPPLFGKKDPRARGEEASGPRGVVDLTQEARAEGRQDRGPPRLAERLSPFLAESKTKNAALQPSVLTMCNGGAGDVGLPALVAEAGRGGAKEAARQDEGARLLRRTETLLPGPRPCPSPLPPPPAPPKGPPAPPAATPAGVYTVFREQGREHRVVAPTFVPSVEAFDERPGPIQIASQARDARAREREAGRPGVLQAPPGSPRPLDRPEGLREKNSVIRSLKRPPPADAPTVRATRASPDPRAYVPAKELLKPEADPRPCERAPRGPAGPAAQQAAKLFGLEPGRPPPTGPEHKWKPFELGNFAATQMAVLAAQHHHSRAEEEAAVVAASSSKKAYLDPGAVLPRSAATCGRPVADMHSAAHGSGEASAMQSLIKYSGSFARDAVAVRPGGCGKKSPFGGLGTMKPEPAPTSAGASRAQARLPHSGGPAAGGGRQLKRDPERPESAKAFGREGSGAQGEAEVRHPPVGIAVAVARQKDSGGSGRLGPGLVDQERSLSLSNVKGHGRADEDCVDDRARHREERLLGARLDRDQEKLLRESKELADLARLHPTSCAPNGLNPNLMVTGGPALAGSGRWSADPAAHLATHPWLPRSGNASMWLAGHPYGLGPPSLHQGMAPAFPPGLGGSLPSAYQFVRDPQSGQLVVIPSDHLPHFAELMERATVPPLWPALYPPGRSPLHHAQQLQLFSQQHFLRQQEFLYLQQQAAQALELQRSAQLVQERLKAQEHRAEMEEKGSKRGLEAAGKAGLATAGPGLLPRKPPGLAAGPAGTYGKAVSPPPSPRASPVAALKAKVIQKLEDVSKPPAYAYPATPSSHPTSPPPASPPPTPGITRKEEAPENVVEKKDLELEKEAPSPFQALFSDIPPRYPFQALPPHYGRPYPFLLQPTAAADADGLAPDVPLPADGPERLALSPEDKPIRLSPSKITEPLREGPEEEPLAEREVKAEVEDMDEGPTELPPLESPLPLPAAEAMATPSPAGGCGGGLLEAQALSATGQSCAEPSECPDFVEGPEPRVDSPGRTEPCTAALDLGVQLTPETLVEAKEEPVEVPVAVPVVEAVPEEGLAQVAPSESQPTLEMSDCDVPAGEGQCPSLEPQEAVPVLGSTCFLEEASSDQFLPSLEDPLAGMNALAAAAELPQARPLPSPGAAGAQALEKLEAAESLVLEQSFLHGITLLSEIAELELERRSQEMGGAERALVARPSLESLLAAGSHMLREVLDGPVVDPLKNLRLPRELKPNKKYSWMRKKEERMYAMKSSLEDMDALELDFRMRLAEVQRQYKEKQRELVKLQRRRDSEDRREEPHRSLARRGPGRPRKRTHAPSALSPPRKRGKSGHSSGKLSSKSLLTSDDYELGAGIRKRHKGSEEEHDALIGMGKARGRNQTWDEHEASSDFISQLKIKKKKMASDQEQLASKLDKALSLTKQDKLKSPFKFSDSAGGKSKTSGGCGRYLTPYDSLLGKNRKALAKGLGLSLKSSREGKHKRAAKTRKMEVGFKARGQPKSAHSPFASEVSSYSYNTDSEEDEEFLKDEWPAQGPSSSKLTPSLLCSMVAKNSKAAGGPKLTKRGLAAPRTLKPKPATSRKQPFCLLLREAEARSSFSDSSEESFDQDESSEEEDEEEELEEEDEASGGGYRLGARERALSPGLEESGLGLLARFAASALPSPTVGPSLSVVQLEAKQKARKKEERQSLLGTEFEYTDSESEVKVRKRSPAGLLRPKKGLGEPGPSLAAPTPGARGPDPSSPDKAKLAVEKGRKARKLRGPKEPGFEAGPEASDDDLWTRRRSERIFLHDASAAAPAPVSTAPATKTSRCAKGGPLSPRKDAGRAKDRKDPRKKKKGKEAGPGAGLPPPRAPALPSEARAPHASSLTAAKRSKAKAKGKEVKKENRGKGGAVSKLMESMAAEEDFEPNQDSSFSEDEHLPRGGAVERPLTPAPRSCIIDKDELKDGLRVLIPMDDKLLYAGHVQTVHSPDIYRVVVEGERGNRPHIYCLEQLLQEAIIDVRPASTRFLPQGTRIAAYWSQQYRCLYPGTVVRGLLDLEDDGDLITVEFDDGDTGRIPLSHIRLLPPDYKIQCAEPSPALLVPSAKRRSRKTSKDTGEGKDGGTAGSEEPGAKARGRGRKPSAKAKGDRAATLEEGNPTDEVPSTPLALEPSSTPGSKKSPPEPVDKRAKAPKARPAPPQPSPAPPAFTSCPAPEPFAELPAPATSLAPAPLITMPATRPKPKKARAAEESGAKGPRRPGEEAELLVKLDHEGVTSPKSKKAKEALLLREDPGAGGWQEPKSLLSLGSYPPAAGSSEPKAPWPKATDGDLAQEPGPGLTFEDSGNPKSPDKAQAEQDGAEESESSSSSSSGSSSSSSSSSSSGSETEGEEEGDKNGDGGCGTGGRNCSAASSRAASPASSSSSSSSSSSSSSSSSSSSSSSSSSSSSSSSSSSSSSSSSSSSSSSSSSSSSSSSSSTTDEDSSCSSDDEAAPAPTAGPSAQAALPTKATKQAGKARPSAHSPGKKTPAPQPQAPPPQPTQPLQPKAQAGAKSRPKKREGVHLPTTKELAKRQRLPSVENRPKIAAFLPARQLWKWFGKPTQRRGMKGKARKLFYKAIVRGKEMIRIGDCAVFLSAGRPNLPYIGRIQSMWESWGNNMVVRVKWFYHPEETSPGKQFHQGQHWDQKSSRSLPAALRVSSQRKDFMERALYQSSHVDENDVQTVSHKCLVVGLEQYEQMLKTKKYQDSEGLYYLAGTYEPTTGMIFSTDGVPVLC.

Disordered regions lie at residues 1–24 (MDGRDFGPQRSVHGPPPPLLSGLA) and 139–261 (GSPL…LAER). Residues 139 to 150 (GSPLLSQLGQPS) show a composition bias toward low complexity. Composition is skewed to basic and acidic residues over residues 221 to 233 (GKKDPRARGEEAS) and 243 to 260 (QEARAEGRQDRGPPRLAE). Ser263 is subject to Phosphoserine. Over residues 304–322 (GAKEAARQDEGARLLRRTE) the composition is skewed to basic and acidic residues. 2 disordered regions span residues 304–356 (GAKE…PAGV) and 381–488 (FDER…PAAQ). Pro residues predominate over residues 327 to 351 (GPRPCPSPLPPPPAPPKGPPAPPAA). Basic and acidic residues-rich tracts occupy residues 395-405 (RDARAREREAG), 419-431 (PLDRPEGLREKNS), and 464-479 (ELLKPEADPRPCERAP). Ser611 is subject to Phosphoserine. Disordered regions lie at residues 612–679 (PFGG…EVRH), 941–1002 (EHRA…SPVA), 1019–1055 (PAYAYPATPSSHPTSPPPASPPPTPGITRKEEAPENV), 1106–1190 (DADG…MATP), 1212–1236 (SCAEPSECPDFVEGPEPRVDSPGRT), 1279–1306 (LAQVAPSESQPTLEMSDCDVPAGEGQCP), 1497–1566 (KQRE…SDDY), and 1687–1855 (SLKS…RERA). Lys620 participates in a covalent cross-link: Glycyl lysine isopeptide (Lys-Gly) (interchain with G-Cter in SUMO2). Basic and acidic residues-rich tracts occupy residues 651–660 (LKRDPERPES) and 941–955 (EHRAEMEEKGSKRGL). Residues 916 to 949 (LQQQAAQALELQRSAQLVQERLKAQEHRAEMEEK) are a coiled coil. Low complexity-rich tracts occupy residues 966-983 (AGPGLLPRKPPGLAAGPA) and 1019-1031 (PAYAYPATPSSHP). Pro residues predominate over residues 1032 to 1043 (TSPPPASPPPTP). A compositionally biased stretch (basic and acidic residues) spans 1046–1055 (TRKEEAPENV). Residues Ser1127 and Ser1136 each carry the phosphoserine modification. Basic and acidic residues predominate over residues 1142 to 1162 (EPLREGPEEEPLAEREVKAEV). The span at 1171-1181 (ELPPLESPLPL) shows a compositional bias: pro residues. Residues 1481 to 1516 (LDFRMRLAEVQRQYKEKQRELVKLQRRRDSEDRREE) are a coiled coil. Basic and acidic residues predominate over residues 1497–1519 (KQRELVKLQRRRDSEDRREEPHR). Over residues 1520 to 1534 (SLARRGPGRPRKRTH) the composition is skewed to basic residues. A Phosphoserine modification is found at Ser1540. Residues 1549–1563 (GHSSGKLSSKSLLTS) show a composition bias toward low complexity. Residues 1816–1842 (SSEESFDQDESSEEEDEEEELEEEDEA) show a composition bias toward acidic residues. Phosphoserine is present on residues Ser1857 and Ser1863. 2 disordered regions span residues 1912–2148 (YTDS…LTPA) and 2295–2771 (LLVP…RLPS). 2 stretches are compositionally biased toward basic and acidic residues: residues 1957–1968 (SPDKAKLAVEKG) and 1993–2004 (LWTRRRSERIFL). Residues 2007–2024 (ASAAAPAPVSTAPATKTS) are compositionally biased toward low complexity. A compositionally biased stretch (basic and acidic residues) spans 2034–2046 (PRKDAGRAKDRKD). Over residues 2069-2085 (ALPSEARAPHASSLTAA) the composition is skewed to low complexity. The span at 2093–2103 (KGKEVKKENRG) shows a compositional bias: basic and acidic residues. A Phosphothreonine modification is found at Thr2146. The segment covering 2307–2316 (TSKDTGEGKD) has biased composition (basic and acidic residues). Residues 2329–2338 (ARGRGRKPSA) are compositionally biased toward basic residues. Low complexity predominate over residues 2365–2374 (EPSSTPGSKK). Over residues 2375–2384 (SPPEPVDKRA) the composition is skewed to basic and acidic residues. Residues 2390–2401 (RPAPPQPSPAPP) are compositionally biased toward pro residues. The segment covering 2411–2433 (PFAELPAPATSLAPAPLITMPAT) has biased composition (low complexity). Composition is skewed to basic and acidic residues over residues 2441–2468 (RAAEESGAKGPRRPGEEAELLVKLDHEG) and 2477–2487 (AKEALLLREDP). 2 stretches are compositionally biased toward low complexity: residues 2559-2580 (SSSSSSSGSSSSSSSSSSSGSE) and 2603-2671 (SAAS…SSSS). A compositionally biased stretch (acidic residues) spans 2673–2685 (TDEDSSCSSDDEA). Residues 2723-2736 (APQPQAPPPQPTQP) are compositionally biased toward pro residues. Position 2771 is a phosphoserine (Ser2771). Positions 2817 to 2962 (EMIRIGDCAV…PTTGMIFSTD (146 aa)) constitute a BAH domain.

This is Trinucleotide repeat-containing gene 18 protein from Homo sapiens (Human).